Consider the following 1193-residue polypeptide: DNA-directed RNA polymerase subunit beta (1193 aa).

The span at 1149-1162 shows a compositional bias: acidic residues; sequence EEEIEMRDLEDEED. The disordered stretch occupies residues 1149–1193; the sequence is EEEIEMRDLEDEEDAKQADGLALSGDEEPEETASADVERDVVTKE. Basic and acidic residues predominate over residues 1184–1193; the sequence is DVERDVVTKE.

Belongs to the RNA polymerase beta chain family. RNAP is composed of a core of 2 alpha, a beta and a beta' subunit. The core is associated with a delta subunit, and at least one of epsilon or omega. When a sigma factor is associated with the core the holoenzyme is formed, which can initiate transcription.

The enzyme catalyses RNA(n) + a ribonucleoside 5'-triphosphate = RNA(n+1) + diphosphate. DNA-dependent RNA polymerase catalyzes the transcription of DNA into RNA using the four ribonucleoside triphosphates as substrates. In Bacillus subtilis (strain 168), this protein is DNA-directed RNA polymerase subunit beta.